A 138-amino-acid polypeptide reads, in one-letter code: Transcription antitermination protein NusB (138 aa).

It belongs to the NusB family.

Involved in transcription antitermination. Required for transcription of ribosomal RNA (rRNA) genes. Binds specifically to the boxA antiterminator sequence of the ribosomal RNA (rrn) operons. The sequence is that of Transcription antitermination protein NusB from Leptospira interrogans serogroup Icterohaemorrhagiae serovar copenhageni (strain Fiocruz L1-130).